The primary structure comprises 394 residues: MFELVDNVPQSAVIKVIGVGGGGGNAVNHMAATSIEGIEFICANTDAQALKNITARTVLQLGSGVTKGLGAGANPEVGREAAMEDRERIAEVLQGTDMVFITTGMGGGTGTGAAPVIAEVAKGLGILTVAVVTRPFPFEGRKRMQVAEEGIRLLAEHVDSLITIPNEKLLTILGKDASLLSAFAKADDVLAGAVRGISDIIKLSGMINVDFADVKTVMSEMGMAMMGTGFASGPNRAREATEAAIRNPLLEDVHLQGARGILVNITAGPDLSLGEYSDVGNIIEQFASDQAMVKVGTVIDPDMRDELHVTVVATGLGTRADKPMKVVDNTLQPAGAAAAAPAVPRGDQTVNYKDYERPTVQRQSHAASATAAKINPQDDLDYLDIPAFLRRQAD.

Residues glycine 21–asparagine 25, glycine 108–glycine 110, glutamate 139, arginine 143, and aspartate 187 contribute to the GTP site.

The protein belongs to the FtsZ family. In terms of assembly, homodimer. Polymerizes to form a dynamic ring structure in a strictly GTP-dependent manner. Interacts directly with several other division proteins.

The protein resides in the cytoplasm. In terms of biological role, essential cell division protein that forms a contractile ring structure (Z ring) at the future cell division site. The regulation of the ring assembly controls the timing and the location of cell division. One of the functions of the FtsZ ring is to recruit other cell division proteins to the septum to produce a new cell wall between the dividing cells. Binds GTP and shows GTPase activity. The sequence is that of Cell division protein FtsZ from Azotobacter vinelandii.